A 656-amino-acid polypeptide reads, in one-letter code: tRNA 5-methylaminomethyl-2-thiouridine biosynthesis bifunctional protein MnmC (656 aa).

Positions 1–236 (MTDPLIPAVL…KRAMLVGHFA (236 aa)) are tRNA (mnm(5)s(2)U34)-methyltransferase. An FAD-dependent cmnm(5)s(2)U34 oxidoreductase region spans residues 260 to 656 (IGAGLAGCAV…LRALRQGAVS (397 aa)).

The protein in the N-terminal section; belongs to the methyltransferase superfamily. tRNA (mnm(5)s(2)U34)-methyltransferase family. In the C-terminal section; belongs to the DAO family. FAD is required as a cofactor.

Its subcellular location is the cytoplasm. It catalyses the reaction 5-aminomethyl-2-thiouridine(34) in tRNA + S-adenosyl-L-methionine = 5-methylaminomethyl-2-thiouridine(34) in tRNA + S-adenosyl-L-homocysteine + H(+). Catalyzes the last two steps in the biosynthesis of 5-methylaminomethyl-2-thiouridine (mnm(5)s(2)U) at the wobble position (U34) in tRNA. Catalyzes the FAD-dependent demodification of cmnm(5)s(2)U34 to nm(5)s(2)U34, followed by the transfer of a methyl group from S-adenosyl-L-methionine to nm(5)s(2)U34, to form mnm(5)s(2)U34. The protein is tRNA 5-methylaminomethyl-2-thiouridine biosynthesis bifunctional protein MnmC of Paraburkholderia phytofirmans (strain DSM 17436 / LMG 22146 / PsJN) (Burkholderia phytofirmans).